Reading from the N-terminus, the 130-residue chain is Small ribosomal subunit protein uS9 (130 aa).

Residues 111–130 (VERKKVGLRKARRRPQFSKR) form a disordered region. Over residues 116–130 (VGLRKARRRPQFSKR) the composition is skewed to basic residues.

Belongs to the universal ribosomal protein uS9 family.

This Enterobacter sp. (strain 638) protein is Small ribosomal subunit protein uS9.